The sequence spans 335 residues: uncharacterized protein (335 aa).

Transmembrane regions (helical) follow at residues 104–124 (FKKV…MGLL), 128–148 (LLQG…LSLF), 280–300 (LAFG…TMIG), and 310–330 (TINL…GIFV).

Its subcellular location is the cell membrane. This is an uncharacterized protein from Methanocaldococcus jannaschii (strain ATCC 43067 / DSM 2661 / JAL-1 / JCM 10045 / NBRC 100440) (Methanococcus jannaschii).